Reading from the N-terminus, the 64-residue chain is Neurotoxin lambda-MeuTx (64 aa).

A signal peptide spans 1-18 (MSTFIVVFLLLTAILCHA). Positions 19 to 27 (EHAIDETAR) are excised as a propeptide. Intrachain disulfides connect Cys29-Cys43, Cys36-Cys49, and Cys42-Cys58.

This sequence belongs to the scorpion calcin-like family. Expressed by the venom gland.

It localises to the secreted. Its function is as follows. Voltage-gated potassium channel (Kv) inhibitor. In addition it may increase intracellular calcium release through the activation of nuclear inositol 1,4,5-trisphosphate receptors (ITPR) of cardiomyocytes, thereby causing an increase in the contraction frequency of these cells. In Mesobuthus eupeus (Lesser Asian scorpion), this protein is Neurotoxin lambda-MeuTx.